The primary structure comprises 76 residues: Small ribosomal subunit protein bS18 (76 aa).

The protein belongs to the bacterial ribosomal protein bS18 family. Part of the 30S ribosomal subunit. Forms a tight heterodimer with protein bS6.

Its function is as follows. Binds as a heterodimer with protein bS6 to the central domain of the 16S rRNA, where it helps stabilize the platform of the 30S subunit. The polypeptide is Small ribosomal subunit protein bS18 (Nitrosomonas eutropha (strain DSM 101675 / C91 / Nm57)).